A 492-amino-acid chain; its full sequence is Probable cobyric acid synthase (492 aa).

The region spanning 252–444 is the GATase cobBQ-type domain; that stretch reads PIEVNIVKFS…FHGILENFEF (193 aa). Cys330 acts as the Nucleophile in catalysis. His436 is an active-site residue.

This sequence belongs to the CobB/CobQ family. CobQ subfamily.

It functions in the pathway cofactor biosynthesis; adenosylcobalamin biosynthesis. Functionally, catalyzes amidations at positions B, D, E, and G on adenosylcobyrinic A,C-diamide. NH(2) groups are provided by glutamine, and one molecule of ATP is hydrogenolyzed for each amidation. The sequence is that of Probable cobyric acid synthase from Methanococcus maripaludis (strain C7 / ATCC BAA-1331).